Here is a 341-residue protein sequence, read N- to C-terminus: Arfaptin-2 (341 aa).

The segment at 46 to 85 (NETSIVSGGYGGSGDGLIPTGSGRHPSHSTTPSGPGDEVA) is disordered. Phosphoserine is present on serine 72. Threonine 76 bears the Phosphothreonine mark. An AH domain is found at 121-321 (TVDLELELQI…NQKQLEQTLQ (201 aa)).

In terms of assembly, forms homodimers or heterodimers with ARFIP1. Interacts with RAC1. Specifically binds to GTP-bound ARF1 and ARF6, but binds to RAC1.GTP and RAC1.GDP with similar affinities. Interacts with ARL1. Interacts (via N-terminus) with IKBKB and IKBKG; these interactions inhibit activation of NF-kappa-B.

The protein localises to the golgi apparatus. It is found in the trans-Golgi network membrane. Plays a role in constitutive metalloproteinase (MMP) secretion from the trans Golgi network. May have important functions during vesicle biogenesis at certain cargo subdomains, which could be predominantly utilized by secreted MMPs, such as MMP7 and MMP2. Also involved in autophagy by regulating the starvation-dependent trafficking of ATG9A vesicles which deliver the phosphatidylinositol 4-kinase beta (PI4KB) to the autophagosome initiation site. Involved in phagophore growth during mitophagy by regulating ATG9A trafficking to mitochondria. In addition, plays a role in NF-kappa-B inhibition by interacting with IKBKB and IKBKG. This Homo sapiens (Human) protein is Arfaptin-2.